The following is a 203-amino-acid chain: Peptidyl-tRNA hydrolase (203 aa).

Tyr26 is a binding site for tRNA. Residue His31 is the Proton acceptor of the active site. The tRNA site is built by Tyr82, Asn84, and Asn130.

The protein belongs to the PTH family. As to quaternary structure, monomer.

It localises to the cytoplasm. The enzyme catalyses an N-acyl-L-alpha-aminoacyl-tRNA + H2O = an N-acyl-L-amino acid + a tRNA + H(+). Hydrolyzes ribosome-free peptidyl-tRNAs (with 1 or more amino acids incorporated), which drop off the ribosome during protein synthesis, or as a result of ribosome stalling. Functionally, catalyzes the release of premature peptidyl moieties from peptidyl-tRNA molecules trapped in stalled 50S ribosomal subunits, and thus maintains levels of free tRNAs and 50S ribosomes. The polypeptide is Peptidyl-tRNA hydrolase (Streptomyces avermitilis (strain ATCC 31267 / DSM 46492 / JCM 5070 / NBRC 14893 / NCIMB 12804 / NRRL 8165 / MA-4680)).